Here is a 188-residue protein sequence, read N- to C-terminus: Photosystem I assembly protein Ycf4 (188 aa).

2 helical membrane-spanning segments follow: residues 26–46 (YFWA…GLSS) and 70–90 (LLFY…SLLW).

Belongs to the Ycf4 family.

It is found in the cellular thylakoid membrane. In terms of biological role, seems to be required for the assembly of the photosystem I complex. The sequence is that of Photosystem I assembly protein Ycf4 from Microcystis aeruginosa (strain NIES-843 / IAM M-2473).